Reading from the N-terminus, the 343-residue chain is N-acetyl-gamma-glutamyl-phosphate reductase (343 aa).

The active site involves Cys-146.

Belongs to the NAGSA dehydrogenase family. Type 1 subfamily.

The protein resides in the cytoplasm. The catalysed reaction is N-acetyl-L-glutamate 5-semialdehyde + phosphate + NADP(+) = N-acetyl-L-glutamyl 5-phosphate + NADPH + H(+). Its pathway is amino-acid biosynthesis; L-arginine biosynthesis; N(2)-acetyl-L-ornithine from L-glutamate: step 3/4. Catalyzes the NADPH-dependent reduction of N-acetyl-5-glutamyl phosphate to yield N-acetyl-L-glutamate 5-semialdehyde. The polypeptide is N-acetyl-gamma-glutamyl-phosphate reductase (Acidothermus cellulolyticus (strain ATCC 43068 / DSM 8971 / 11B)).